Here is a 182-residue protein sequence, read N- to C-terminus: UPF0316 protein BCG9842_B1857 (182 aa).

Transmembrane regions (helical) follow at residues 6–26 (LIFVLQIIYVPILTIRTILLV), 32–52 (SAAGVGLLEGAIYIVSLGIVF), and 58–78 (WMNIVAYVIGFSTGLLLGGYI).

Belongs to the UPF0316 family.

The protein resides in the cell membrane. In Bacillus cereus (strain G9842), this protein is UPF0316 protein BCG9842_B1857.